A 99-amino-acid polypeptide reads, in one-letter code: Aspartyl/glutamyl-tRNA(Asn/Gln) amidotransferase subunit C (99 aa).

Belongs to the GatC family. In terms of assembly, heterotrimer of A, B and C subunits.

It catalyses the reaction L-glutamyl-tRNA(Gln) + L-glutamine + ATP + H2O = L-glutaminyl-tRNA(Gln) + L-glutamate + ADP + phosphate + H(+). The catalysed reaction is L-aspartyl-tRNA(Asn) + L-glutamine + ATP + H2O = L-asparaginyl-tRNA(Asn) + L-glutamate + ADP + phosphate + 2 H(+). In terms of biological role, allows the formation of correctly charged Asn-tRNA(Asn) or Gln-tRNA(Gln) through the transamidation of misacylated Asp-tRNA(Asn) or Glu-tRNA(Gln) in organisms which lack either or both of asparaginyl-tRNA or glutaminyl-tRNA synthetases. The reaction takes place in the presence of glutamine and ATP through an activated phospho-Asp-tRNA(Asn) or phospho-Glu-tRNA(Gln). This chain is Aspartyl/glutamyl-tRNA(Asn/Gln) amidotransferase subunit C, found in Paracidovorax citrulli (strain AAC00-1) (Acidovorax citrulli).